Reading from the N-terminus, the 336-residue chain is Anthranilate phosphoribosyltransferase (336 aa).

Residues glycine 79, 82–83 (GD), threonine 87, 89–92 (NIST), 107–115 (KHGNRAMSS), and serine 119 each bind 5-phospho-alpha-D-ribose 1-diphosphate. Glycine 79 is a binding site for anthranilate. Mg(2+) is bound at residue serine 91. An anthranilate-binding site is contributed by asparagine 110. Residue arginine 165 participates in anthranilate binding. Residues aspartate 225 and glutamate 226 each coordinate Mg(2+).

This sequence belongs to the anthranilate phosphoribosyltransferase family. As to quaternary structure, homodimer. The cofactor is Mg(2+).

The enzyme catalyses N-(5-phospho-beta-D-ribosyl)anthranilate + diphosphate = 5-phospho-alpha-D-ribose 1-diphosphate + anthranilate. It participates in amino-acid biosynthesis; L-tryptophan biosynthesis; L-tryptophan from chorismate: step 2/5. Catalyzes the transfer of the phosphoribosyl group of 5-phosphorylribose-1-pyrophosphate (PRPP) to anthranilate to yield N-(5'-phosphoribosyl)-anthranilate (PRA). This is Anthranilate phosphoribosyltransferase from Dictyoglomus thermophilum (strain ATCC 35947 / DSM 3960 / H-6-12).